Consider the following 468-residue polypeptide: 6-phosphogluconate dehydrogenase, decarboxylating (468 aa).

Residues 10 to 15 (GMAVMG), 33 to 35 (NRS), 74 to 76 (VKA), and N102 each bind NADP(+). Residues N102 and 128-130 (SGG) contribute to the substrate site. The active-site Proton acceptor is the K183. 186–187 (HN) contacts substrate. The Proton donor role is filled by E190. Substrate contacts are provided by Y191, K260, R287, R445, and H451.

Belongs to the 6-phosphogluconate dehydrogenase family. As to quaternary structure, homodimer.

The catalysed reaction is 6-phospho-D-gluconate + NADP(+) = D-ribulose 5-phosphate + CO2 + NADPH. The protein operates within carbohydrate degradation; pentose phosphate pathway; D-ribulose 5-phosphate from D-glucose 6-phosphate (oxidative stage): step 3/3. Its function is as follows. Catalyzes the oxidative decarboxylation of 6-phosphogluconate to ribulose 5-phosphate and CO(2), with concomitant reduction of NADP to NADPH. In Shigella flexneri, this protein is 6-phosphogluconate dehydrogenase, decarboxylating (gnd).